The chain runs to 214 residues: Scytalone dehydratase-like protein mdpB (214 aa).

Tyr40 and Tyr60 together coordinate substrate. Catalysis depends on residues His95 and His120.

Belongs to the scytalone dehydratase family.

It functions in the pathway secondary metabolite biosynthesis. Scytalone dehydratase-like protein; part of the gene cluster that mediates the biosynthesis of monodictyphenone, a prenyl xanthone derivative. The pathway begins with the synthesis of atrochrysone thioester by the polyketide synthase (PKS) mdpG. The atrochrysone carboxyl ACP thioesterase mdpF then breaks the thioester bond and releases the atrochrysone carboxylic acid from mdpG. The atrochrysone carboxylic acid is then converted to atrochrysone which is further transformed into emodin anthrone. The next step is performed by the anthrone oxygenase mdpH that catalyzes the oxidation of emodinanthrone to emodin. Emodin is further modified to yield monodictyphenone via several steps involving mdpB, mdpC mdpJ, mdpK and mdpL. These enzymes with xptA, xptB and xptC are also proposed to be involved in the synthesis of shamixanthone from emodin. Especially, direct reduction of emodin by the short chain dehydrogenase mdpC followed by dehydration catalyzed by the scytalone dehydratase-like protein mdpB gives loss of oxygen and formation of chrysophanol intermediate in two simple steps. The sequence is that of Scytalone dehydratase-like protein mdpB from Emericella nidulans (strain FGSC A4 / ATCC 38163 / CBS 112.46 / NRRL 194 / M139) (Aspergillus nidulans).